Consider the following 353-residue polypeptide: Transcription termination/antitermination protein NusG (353 aa).

Residues 301 to 335 (VGDMVKIISGPFEDFAGVIKEIDPERQELKVNVTI) form the KOW domain.

The protein belongs to the NusG family.

Its activity is regulated as follows. Regulated by autoinhibition via interaction of the N-terminal and the C-terminal domains. Autoinhibition may prevent NusG from interacting prematurely with other components of the transcription complex or non-specific interactions with other cellular components. In terms of biological role, participates in transcription elongation, termination and antitermination. This is Transcription termination/antitermination protein NusG from Thermotoga maritima (strain ATCC 43589 / DSM 3109 / JCM 10099 / NBRC 100826 / MSB8).